We begin with the raw amino-acid sequence, 334 residues long: MLNVVIVGASGYAGAELVNYMHRHRFANIKKIFVSKNSLNIDKLFSDVHQQFKNIVDLRFDTIRNCTLIKKNIDAVFLATDHRVSHSLVPFFLSSNCIVFDLSASYRMNNKKVYLDYYGFVHEYEELLKNSVYGLAEWEQEKIKKANLIALPGCYATCIQLVLKPLIKENVLCDKNIPIINAISGVSGAGRKASLNNSFCEVSLQPYNIFTHRHTPEIIEKLGVPVIFIPHLGPFSRGIIATITCKLKPNVKSIDIHNIFNKFYKNKPLIRIYKKYLPSIKSVEKQPFCDIGFVIKDDYIVIVAAEDNLLKGAAAQAVQCFNVRFGFSETESII.

Residue Cys-154 is part of the active site.

The protein belongs to the NAGSA dehydrogenase family. Type 1 subfamily.

The protein resides in the cytoplasm. It carries out the reaction N-acetyl-L-glutamate 5-semialdehyde + phosphate + NADP(+) = N-acetyl-L-glutamyl 5-phosphate + NADPH + H(+). The protein operates within amino-acid biosynthesis; L-arginine biosynthesis; N(2)-acetyl-L-ornithine from L-glutamate: step 3/4. Its function is as follows. Catalyzes the NADPH-dependent reduction of N-acetyl-5-glutamyl phosphate to yield N-acetyl-L-glutamate 5-semialdehyde. This Buchnera aphidicola subsp. Acyrthosiphon pisum (strain Tuc7) protein is N-acetyl-gamma-glutamyl-phosphate reductase.